The following is a 189-amino-acid chain: ATP synthase subunit b 1 (189 aa).

The chain crosses the membrane as a helical span at residues 32 to 52; sequence TYFASQLFWLTIAFVILYIAL.

It belongs to the ATPase B chain family. F-type ATPases have 2 components, F(1) - the catalytic core - and F(0) - the membrane proton channel. F(1) has five subunits: alpha(3), beta(3), gamma(1), delta(1), epsilon(1). F(0) has three main subunits: a(1), b(2) and c(10-14). The alpha and beta chains form an alternating ring which encloses part of the gamma chain. F(1) is attached to F(0) by a central stalk formed by the gamma and epsilon chains, while a peripheral stalk is formed by the delta and b chains.

The protein resides in the cell inner membrane. Functionally, f(1)F(0) ATP synthase produces ATP from ADP in the presence of a proton or sodium gradient. F-type ATPases consist of two structural domains, F(1) containing the extramembraneous catalytic core and F(0) containing the membrane proton channel, linked together by a central stalk and a peripheral stalk. During catalysis, ATP synthesis in the catalytic domain of F(1) is coupled via a rotary mechanism of the central stalk subunits to proton translocation. Component of the F(0) channel, it forms part of the peripheral stalk, linking F(1) to F(0). The protein is ATP synthase subunit b 1 of Maricaulis maris (strain MCS10) (Caulobacter maris).